A 509-amino-acid polypeptide reads, in one-letter code: Meiotically up-regulated gene 157 protein (509 aa).

5 helical membrane passes run Trp-4–Trp-24, Leu-140–Tyr-160, Ala-296–Leu-316, Ile-368–Val-388, and Ile-417–Val-437.

Its subcellular location is the endoplasmic reticulum membrane. Functionally, has a role in meiosis. The chain is Meiotically up-regulated gene 157 protein (mug157) from Schizosaccharomyces pombe (strain 972 / ATCC 24843) (Fission yeast).